The sequence spans 574 residues: C6 finger transcription factor poxB (574 aa).

Residues cysteine 19–cysteine 51 constitute a DNA-binding region (zn(2)-C6 fungal-type). Disordered stretches follow at residues proline 111–arginine 133, serine 242–histidine 262, and leucine 376–alanine 404.

Its subcellular location is the nucleus. Transcription factor that positively regulates the expression of the gene cluster that mediates the biosynthesis of oxaleimides, cytotoxic compounds containing an unusual disubstituted succinimide moiety. The sequence is that of C6 finger transcription factor poxB from Penicillium oxalicum.